A 461-amino-acid chain; its full sequence is Piperine synthase (461 aa).

Catalysis depends on proton acceptor residues His168 and Asp387. The Microbody targeting signal signature appears at Ser459 to Met461.

This sequence belongs to the plant acyltransferase family. Monomer. Confined to immature fruits perisperm. Also detectable in roots.

Its subcellular location is the cytoplasm. The enzyme catalyses piperidine + (E,E)-piperoyl-CoA = piperine + CoA + H(+). It carries out the reaction pyrrolidine + (E,E)-piperoyl-CoA = piperyline + CoA + H(+). The catalysed reaction is (E,E)-piperoyl-CoA + 2-methylpropan-1-amine = (E,E)-piperlonguminine + CoA + H(+). Its pathway is aromatic compound metabolism. Involved in the biosynthesis of aromatic piperamides natural products such as piperine (1-piperoyl-piperidine), the pungent principle contributing, together with several terpenoids, to the aromatic properties of black pepper fruits, and displaying numerous pharmacological activities such as antiproliferative, antitumor, antiangiogenesis, antioxidant, antidiabetic, antiobesity, cardioprotective, antimicrobial, antiaging, and immunomodulatory effects. Mediates mainly the conversion of piperidine and piperoyl-CoA to piperine. Can also use pyrrolidine and isobutylamine as acceptors and 3,4-methylenedioxycinnamoyl-CoA as an alternative CoA-donor with a lower efficiency. In Piper nigrum (Black pepper), this protein is Piperine synthase.